Reading from the N-terminus, the 488-residue chain is Probable glycine dehydrogenase (decarboxylating) subunit 2 (488 aa).

N6-(pyridoxal phosphate)lysine is present on Lys-274.

It belongs to the GcvP family. C-terminal subunit subfamily. The glycine cleavage system is composed of four proteins: P, T, L and H. In this organism, the P 'protein' is a heterodimer of two subunits. The cofactor is pyridoxal 5'-phosphate.

The catalysed reaction is N(6)-[(R)-lipoyl]-L-lysyl-[glycine-cleavage complex H protein] + glycine + H(+) = N(6)-[(R)-S(8)-aminomethyldihydrolipoyl]-L-lysyl-[glycine-cleavage complex H protein] + CO2. The glycine cleavage system catalyzes the degradation of glycine. The P protein binds the alpha-amino group of glycine through its pyridoxal phosphate cofactor; CO(2) is released and the remaining methylamine moiety is then transferred to the lipoamide cofactor of the H protein. The chain is Probable glycine dehydrogenase (decarboxylating) subunit 2 from Listeria monocytogenes serovar 1/2a (strain ATCC BAA-679 / EGD-e).